The chain runs to 277 residues: Pantothenate synthetase (277 aa).

An ATP-binding site is contributed by 26 to 33 (MGYLHQGH). The Proton donor role is filled by His-33. Gln-57 contacts (R)-pantoate. Gln-57 contacts beta-alanine. Residue 143–146 (GQKD) coordinates ATP. Gln-149 contributes to the (R)-pantoate binding site. Residues Val-172 and 180–183 (LSSR) contribute to the ATP site.

This sequence belongs to the pantothenate synthetase family. Homodimer.

Its subcellular location is the cytoplasm. It catalyses the reaction (R)-pantoate + beta-alanine + ATP = (R)-pantothenate + AMP + diphosphate + H(+). The protein operates within cofactor biosynthesis; (R)-pantothenate biosynthesis; (R)-pantothenate from (R)-pantoate and beta-alanine: step 1/1. Catalyzes the condensation of pantoate with beta-alanine in an ATP-dependent reaction via a pantoyl-adenylate intermediate. This is Pantothenate synthetase from Chloroflexus aggregans (strain MD-66 / DSM 9485).